Here is a 463-residue protein sequence, read N- to C-terminus: NADH dehydrogenase [ubiquinone] iron-sulfur protein 2, mitochondrial (463 aa).

The N-terminal 33 residues, 1–33 (MAALRALCGFRGVAAQVLRPGAGVRLPIQPSRG), are a transit peptide targeting the mitochondrion. K62 carries the N6-acetyllysine modification. R118 is modified (symmetric dimethylarginine). Positions 326, 332, and 347 each coordinate [4Fe-4S] cluster.

This sequence belongs to the complex I 49 kDa subunit family. In terms of assembly, core subunit of respiratory chain NADH dehydrogenase (Complex I) which is composed of 45 different subunits. Component of the iron-sulfur (IP) fragment of the enzyme. Interacts with NDUFAF3. Interacts with NDUFAF7. Interacts with CERS2. It depends on [4Fe-4S] cluster as a cofactor. Dimethylation at Arg-118 by NDUFAF7 takes place after NDUFS2 assembles into the complex I, leading to stabilize the early intermediate complex.

The protein localises to the mitochondrion inner membrane. The enzyme catalyses a ubiquinone + NADH + 5 H(+)(in) = a ubiquinol + NAD(+) + 4 H(+)(out). In terms of biological role, core subunit of the mitochondrial membrane respiratory chain NADH dehydrogenase (Complex I) which catalyzes electron transfer from NADH through the respiratory chain, using ubiquinone as an electron acceptor. Essential for the catalytic activity of complex I. Essential for the assembly of complex I. Redox-sensitive, critical component of the oxygen-sensing pathway in the pulmonary vasculature which plays a key role in acute pulmonary oxygen-sensing and hypoxic pulmonary vasoconstriction. Plays an important role in carotid body sensing of hypoxia. Essential for glia-like neural stem and progenitor cell proliferation, differentiation and subsequent oligodendrocyte or neuronal maturation. The polypeptide is NADH dehydrogenase [ubiquinone] iron-sulfur protein 2, mitochondrial (NDUFS2) (Homo sapiens (Human)).